The primary structure comprises 544 residues: Cytochrome P450 monooxygenase notG' (544 aa).

Residues 1-22 (MELPFSAMSLLYLLVGIAGVIS) form the signal peptide. 2 consecutive transmembrane segments (helical) span residues 42-62 (WYTLIITAPTVVVSIVWGLPL) and 66-86 (AKATGGWALTYFAGLYTSLLL). N-linked (GlcNAc...) asparagine glycosylation is found at Asn226 and Asn404. Cys487 provides a ligand contact to heme.

The protein belongs to the cytochrome P450 family. Requires heme as cofactor.

It localises to the membrane. The protein operates within alkaloid biosynthesis. In terms of biological role, cytochrome P450 monooxygenase; part of the gene cluster that mediates the biosynthesis of notoamide, a fungal indole alkaloid that belongs to a family of natural products containing a characteristic bicyclo[2.2.2]diazaoctane core. The first step of notoamide biosynthesis involves coupling of L-proline and L-tryptophan by the bimodular NRPS notE', to produce cyclo-L-tryptophan-L-proline called brevianamide F. The reverse prenyltransferase notF' then acts as a deoxybrevianamide E synthase and converts brevianamide F to deoxybrevianamide E via reverse prenylation at C-2 of the indole ring leading to the bicyclo[2.2.2]diazaoctane core. Deoxybrevianamide E is further hydroxylated at C-6 of the indole ring, likely catalyzed by the cytochrome P450 monooxygenase notG', to yield 6-hydroxy-deoxybrevianamide E. 6-hydroxy-deoxybrevianamide E is a specific substrate of the prenyltransferase notC' for normal prenylation at C-7 to produce 6-hydroxy-7-prenyl-deoxybrevianamide, also called notoamide S. As the proposed pivotal branching point in notoamide biosynthesis, notoamide S can be diverted to notoamide E through an oxidative pyran ring closure putatively catalyzed by either notH' cytochrome P450 monooxygenase or the notD' FAD-linked oxidoreductase. This step would be followed by an indole 2,3-epoxidation-initiated pinacol-like rearrangement catalyzed by the notB' FAD-dependent monooxygenase leading to the formation of notoamide C and notoamide D. On the other hand notoamide S is converted to notoamide T by notH' (or notD'), a bifunctional oxidase that also functions as the intramolecular Diels-Alderase responsible for generation of (-)-notoamide T. To generate antipodal (+)-notoaminide T, notH (or notD) in Aspergillus strain MF297-2 is expected to catalyze a Diels-Alder reaction leading to the opposite stereochemistry. The remaining oxidoreductase notD' (or notH') likely catalyzes the oxidative pyran ring formation to yield (-)-stephacidin A. The FAD-dependent monooxygenase notI' is highly similar to notB' and is predicted to catalyze a similar conversion from (-)-stephacidin A to (+)-notoamide B via the 2,3-epoxidation of (-)-stephacidin A followed by a pinacol-type rearrangement. Finally, it remains unclear which enzyme could be responsible for the final hydroxylation steps leading to notoamide A and sclerotiamide. In Aspergillus versicolor, this protein is Cytochrome P450 monooxygenase notG'.